Here is a 148-residue protein sequence, read N- to C-terminus: uncharacterized protein (148 aa).

It localises to the plastid. The protein localises to the chloroplast. This is an uncharacterized protein from Porphyra purpurea (Red seaweed).